We begin with the raw amino-acid sequence, 254 residues long: Triosephosphate isomerase (254 aa).

12–14 (NWK) serves as a coordination point for substrate. Residue His-99 is the Electrophile of the active site. The Proton acceptor role is filled by Glu-169. Substrate-binding positions include Gly-175, Ser-214, and 235–236 (GG).

Belongs to the triosephosphate isomerase family. As to quaternary structure, homodimer.

The protein resides in the cytoplasm. It catalyses the reaction D-glyceraldehyde 3-phosphate = dihydroxyacetone phosphate. Its pathway is carbohydrate biosynthesis; gluconeogenesis. It participates in carbohydrate degradation; glycolysis; D-glyceraldehyde 3-phosphate from glycerone phosphate: step 1/1. Functionally, involved in the gluconeogenesis. Catalyzes stereospecifically the conversion of dihydroxyacetone phosphate (DHAP) to D-glyceraldehyde-3-phosphate (G3P). The sequence is that of Triosephosphate isomerase from Chelativorans sp. (strain BNC1).